Reading from the N-terminus, the 137-residue chain is Actin-depolymerizing factor 12 (137 aa).

The residue at position 6 (serine 6) is a Phosphoserine. One can recognise an ADF-H domain in the interval glycine 7–leucine 137.

This sequence belongs to the actin-binding proteins ADF family. In terms of tissue distribution, specifically expressed in pollen.

It is found in the cytoplasm. The protein resides in the cytoskeleton. Actin-depolymerizing protein. Severs actin filaments (F-actin) and binds to actin monomers. The polypeptide is Actin-depolymerizing factor 12 (Arabidopsis thaliana (Mouse-ear cress)).